A 230-amino-acid chain; its full sequence is Ubiquitin carboxyl-terminal hydrolase isozyme L3 (230 aa).

The UCH catalytic domain maps to 5 to 229 (RWLPLEANPE…LRFNAIALSA (225 aa)). The interval 8-13 (PLEANP) is interaction with ubiquitin. The active-site Nucleophile is the Cys-95. Ser-130 carries the post-translational modification Phosphoserine. The tract at residues 152 to 159 (AHEGQTEA) is interaction with ubiquitin. Crossover loop which restricts access of large ubiquitin adducts to the active site. His-169 acts as the Proton donor in catalysis. An interaction with ubiquitin region spans residues 219 to 224 (ELRFNA).

This sequence belongs to the peptidase C12 family. As to quaternary structure, preferentially binds diubiquitin; the interaction does not hydrolyze diubiquitin but, in vitro, inhibits the hydrolyzing activity on other substrates.

The protein localises to the cytoplasm. It catalyses the reaction Thiol-dependent hydrolysis of ester, thioester, amide, peptide and isopeptide bonds formed by the C-terminal Gly of ubiquitin (a 76-residue protein attached to proteins as an intracellular targeting signal).. Its activity is regulated as follows. Inhibited by monoubiquitin and diubiquitin. Deubiquitinating enzyme (DUB) that controls levels of cellular ubiquitin through processing of ubiquitin precursors and ubiquitinated proteins. Thiol protease that recognizes and hydrolyzes a peptide bond at the C-terminal glycine of either ubiquitin or NEDD8. Has a 10-fold preference for Arg and Lys at position P3, and exhibits a preference towards 'Lys-48'-linked ubiquitin chains. Deubiquitinates ENAC in apical compartments, thereby regulating apical membrane recycling. Indirectly increases the phosphorylation of IGFIR, AKT and FOXO1 and promotes insulin-signaling and insulin-induced adipogenesis. Required for stress-response retinal, skeletal muscle and germ cell maintenance. May be involved in working memory. Can hydrolyze UBB(+1), a mutated form of ubiquitin which is not effectively degraded by the proteasome. The chain is Ubiquitin carboxyl-terminal hydrolase isozyme L3 (UCHL3) from Sus scrofa (Pig).